We begin with the raw amino-acid sequence, 391 residues long: Elongation factor Tu (391 aa).

A tr-type G domain is found at 10–201; sequence KPHVNIGTIG…AVDAYIPTPE (192 aa). The segment at 19–26 is G1; that stretch reads GHVDHGKT. 19–26 provides a ligand contact to GTP; the sequence is GHVDHGKT. Thr26 contacts Mg(2+). Residues 55–59 form a G2 region; that stretch reads GITIS. Residues 76–79 are G3; it reads DCPG. GTP-binding positions include 76-80 and 131-134; these read DCPGH and NKVD. The G4 stretch occupies residues 131–134; it reads NKVD. Residues 169-171 form a G5 region; it reads SAL.

It belongs to the TRAFAC class translation factor GTPase superfamily. Classic translation factor GTPase family. EF-Tu/EF-1A subfamily. In terms of assembly, monomer.

The protein resides in the cytoplasm. It carries out the reaction GTP + H2O = GDP + phosphate + H(+). GTP hydrolase that promotes the GTP-dependent binding of aminoacyl-tRNA to the A-site of ribosomes during protein biosynthesis. This chain is Elongation factor Tu, found in Rhizobium meliloti (strain 1021) (Ensifer meliloti).